The sequence spans 85 residues: Translation initiation factor IF-1 (85 aa).

Residues 1-72 (MAKEELLEMR…TKARITYRFM (72 aa)) form the S1-like domain.

It belongs to the IF-1 family. Component of the 30S ribosomal translation pre-initiation complex which assembles on the 30S ribosome in the order IF-2 and IF-3, IF-1 and N-formylmethionyl-tRNA(fMet); mRNA recruitment can occur at any time during PIC assembly.

Its subcellular location is the cytoplasm. In terms of biological role, one of the essential components for the initiation of protein synthesis. Stabilizes the binding of IF-2 and IF-3 on the 30S subunit to which N-formylmethionyl-tRNA(fMet) subsequently binds. Helps modulate mRNA selection, yielding the 30S pre-initiation complex (PIC). Upon addition of the 50S ribosomal subunit IF-1, IF-2 and IF-3 are released leaving the mature 70S translation initiation complex. In Erythrobacter litoralis (strain HTCC2594), this protein is Translation initiation factor IF-1.